The sequence spans 123 residues: Large ribosomal subunit protein uL14 (123 aa).

Belongs to the universal ribosomal protein uL14 family. As to quaternary structure, part of the 50S ribosomal subunit. Forms a cluster with proteins L3 and L19. In the 70S ribosome, L14 and L19 interact and together make contacts with the 16S rRNA in bridges B5 and B8.

Binds to 23S rRNA. Forms part of two intersubunit bridges in the 70S ribosome. The polypeptide is Large ribosomal subunit protein uL14 (Vibrio vulnificus (strain CMCP6)).